The following is a 320-amino-acid chain: N-acetylneuraminate lyase (320 aa).

T51 and T52 together coordinate aceneuramate. The Proton donor role is filled by Y143. K173 acts as the Schiff-base intermediate with substrate in catalysis. Aceneuramate contacts are provided by S175, G199, D201, E202, and S218.

The protein belongs to the DapA family. NanA subfamily. As to quaternary structure, homotetramer.

The protein localises to the cytoplasm. The catalysed reaction is aceneuramate = aldehydo-N-acetyl-D-mannosamine + pyruvate. The protein operates within amino-sugar metabolism; N-acetylneuraminate degradation. Catalyzes the cleavage of N-acetylneuraminic acid (sialic acid) to form pyruvate and N-acetylmannosamine via a Schiff base intermediate. It prevents sialic acids from being recycled and returning to the cell surface. Involved in the N-glycolylneuraminic acid (Neu5Gc) degradation pathway. The protein is N-acetylneuraminate lyase of Rattus norvegicus (Rat).